Consider the following 239-residue polypeptide: Ribonuclease 3 (239 aa).

In terms of domain architecture, RNase III spans 12-137; that stretch reads RAKLEGLIGH…LIAAIYLDGG (126 aa). Glu-50 is a Mg(2+) binding site. Asp-54 is a catalytic residue. The Mg(2+) site is built by Asp-123 and Glu-126. Glu-126 is an active-site residue. The 70-residue stretch at 162–231 folds into the DRBM domain; that stretch reads DAKTELQEWS…ATKMLEREGI (70 aa).

This sequence belongs to the ribonuclease III family. As to quaternary structure, homodimer. Requires Mg(2+) as cofactor.

It localises to the cytoplasm. It catalyses the reaction Endonucleolytic cleavage to 5'-phosphomonoester.. Digests double-stranded RNA. Involved in the processing of primary rRNA transcript to yield the immediate precursors to the large and small rRNAs (23S and 16S). Processes some mRNAs, and tRNAs when they are encoded in the rRNA operon. Processes pre-crRNA and tracrRNA of type II CRISPR loci if present in the organism. In Rhizobium johnstonii (strain DSM 114642 / LMG 32736 / 3841) (Rhizobium leguminosarum bv. viciae), this protein is Ribonuclease 3.